The chain runs to 146 residues: MIYWIFLVLAIICEVIGTLSMKYASVSGGYTGMIVMWLMIATSYIFLAIAVKKVALGVAYALWEGIGIVIITTFSVLWFGESLSALKLGGLAMLIAGITLIKSGTKKSVVAKKTTDSVKNIAGKAKQVATVVKGVNKPISSNVKEA.

The next 4 helical transmembrane spans lie at 1-21 (MIYWIFLVLAIICEVIGTLSM), 31-51 (TGMIVMWLMIATSYIFLAIAV), 54-74 (VALGVAYALWEGIGIVIITTF), and 76-96 (VLWFGESLSALKLGGLAMLIA).

This sequence belongs to the drug/metabolite transporter (DMT) superfamily. Small multidrug resistance (SMR) (TC 2.A.7.1) family. MdtJ subfamily. In terms of assembly, forms a complex with MdtI.

It is found in the cell inner membrane. Its function is as follows. Catalyzes the excretion of spermidine. In Proteus mirabilis (strain HI4320), this protein is Spermidine export protein MdtJ.